A 1103-amino-acid polypeptide reads, in one-letter code: PH, RCC1 and FYVE domains-containing protein 1 (1103 aa).

One can recognise a PH domain in the interval 22–123 (KKGTQLLKYG…IWIGGLKTLI (102 aa)). The segment at 144–233 (DASRELTSSS…SSSHGSAADD (90 aa)) is disordered. Composition is skewed to low complexity over residues 151–169 (SSSP…SSPG) and 217–231 (SVSS…GSAA). RCC1 repeat units follow at residues 237–298 (LGDV…FVTR), 299–351 (QGEI…AVTL), 353–406 (GELY…LITS), 407–458 (YGRL…AVVE), 471–522 (SGKL…GLTT), 524–574 (GQVF…ALTS), and 575–626 (RNEV…AICL). The FYVE-type zinc-finger motif lies at 632-694 (GAEQSQCSTC…VCDSCYVKLS (63 aa)). Positions 638, 641, 654, 657, 662, 665, 686, and 689 each coordinate Zn(2+). Residues 783 to 818 (ATPKLAQAPSGISSRSVSPFSRRSSPPRSATPMPST) are disordered. The segment covering 791-818 (PSGISSRSVSPFSRRSSPPRSATPMPST) has biased composition (low complexity). Positions 828–904 (ADNMKKTNEI…IAQLKDVAEK (77 aa)) form a coiled coil. Polar residues predominate over residues 962–979 (NLQSPKQTPRASERNSNA). Residues 962–988 (NLQSPKQTPRASERNSNAYPADPRLSS) are disordered. The 56-residue stretch at 1023-1078 (AEWIEQYEPGVYITLVALHDGTRDLRRVRFSRRRFGEHQAETWWSENREKVYEKYN) folds into the BRX domain. The tract at residues 1079–1103 (VRVSEKSTASQTHRDRDEEEEDIPH) is disordered.

In terms of tissue distribution, mostly expressed in flowers, and, to a lower extent, in stems, leaves, siliques, seeds.

In terms of biological role, binds to phosphatidic acid and to phosphoinositides such as PtdIns3P, PtdIns(3,4)P(2), PtdIns(3,4,5)P(3) and PtdIns(4,5)P(2). Catalyzes guanine nucleotide exchange on specific Rab proteins. The sequence is that of PH, RCC1 and FYVE domains-containing protein 1 from Arabidopsis thaliana (Mouse-ear cress).